A 471-amino-acid polypeptide reads, in one-letter code: Cleavage and polyadenylation specificity factor subunit 7 (471 aa).

Residues 34 to 68 (VLTAASQPSDDRSSSTEPPPPVRQEPAPKPNNKTP) are disordered. Residues 50–62 (EPPPPVRQEPAPK) are compositionally biased toward pro residues. The RRM domain occupies 82-162 (AAVYVGSFSW…EKVDVRPATR (81 aa)). The segment at 176-220 (ECVRVPRGGIPPRAHSRDSSDSADGRATPSENLVPSSARVDKPPS) is disordered. Basic and acidic residues predominate over residues 190–199 (HSRDSSDSAD). Position 203 is a phosphothreonine (T203). S205 is subject to Phosphoserine. Residue K354 forms a Glycyl lysine isopeptide (Lys-Gly) (interchain with G-Cter in SUMO2) linkage. The tract at residues 409 to 471 (SVGASGSSSR…HRDRERDRHH (63 aa)) is disordered. Phosphoserine occurs at positions 413 and 423. The tract at residues 418–469 (RKRHRSRERSPSRSRESSRRHRDLLHNEDRHDDYFQERNREHERHRDRERDR) is arg/Ser-rich domain. 2 stretches are compositionally biased toward basic and acidic residues: residues 425-434 (ERSPSRSRES) and 441-471 (LLHN…DRHH).

This sequence belongs to the RRM CPSF6/7 family. As to quaternary structure, component of the cleavage factor Im (CFIm) complex which is a heterotetramer composed of two subunits of NUDT21/CPSF5 and two subunits of CPSF6 or CPSF7 or a heterodimer of CPSF6 and CPSF7. The cleavage factor Im (CFIm) complex associates with the CPSF and CSTF complexes to promote the assembly of the core mRNA 3'-processing machinery. Interacts with NUDT21/CPSF5. Interacts (via Arg/Ser-rich domain) with FIP1L1 (preferentially via unphosphorylated form and Arg/Glu/Asp-rich region); this interaction mediates, at least in part, the interaction between the CFIm and CPSF complexes and may be inhibited by CPSF7 hyper-phosphorylation. Post-translationally, phosphorylated. In terms of processing, asymmetrically dimethylated on arginine residues by PRMT1.

It is found in the nucleus. It localises to the cytoplasm. Its function is as follows. Component of the cleavage factor Im (CFIm) complex that functions as an activator of the pre-mRNA 3'-end cleavage and polyadenylation processing required for the maturation of pre-mRNA into functional mRNAs. CFIm contributes to the recruitment of multiprotein complexes on specific sequences on the pre-mRNA 3'-end, so called cleavage and polyadenylation signals (pA signals). Most pre-mRNAs contain multiple pA signals, resulting in alternative cleavage and polyadenylation (APA) producing mRNAs with variable 3'-end formation. The CFIm complex acts as a key regulator of cleavage and polyadenylation site choice during APA through its binding to 5'-UGUA-3' elements localized in the 3'-untranslated region (UTR) for a huge number of pre-mRNAs. CPSF7 activates directly the mRNA 3'-processing machinery. Binds to pA signals in RNA substrates. The polypeptide is Cleavage and polyadenylation specificity factor subunit 7 (Mus musculus (Mouse)).